The sequence spans 145 residues: Ribonuclease P protein component (145 aa).

Residues 120–130 (LPAAPGTMPPA) are compositionally biased toward low complexity. Residues 120 to 145 (LPAAPGTMPPARTMHPSSLSPTEPDL) form a disordered region. The segment covering 134–145 (HPSSLSPTEPDL) has biased composition (polar residues).

It belongs to the RnpA family. As to quaternary structure, consists of a catalytic RNA component (M1 or rnpB) and a protein subunit.

It carries out the reaction Endonucleolytic cleavage of RNA, removing 5'-extranucleotides from tRNA precursor.. Functionally, RNaseP catalyzes the removal of the 5'-leader sequence from pre-tRNA to produce the mature 5'-terminus. It can also cleave other RNA substrates such as 4.5S RNA. The protein component plays an auxiliary but essential role in vivo by binding to the 5'-leader sequence and broadening the substrate specificity of the ribozyme. The polypeptide is Ribonuclease P protein component (Xanthomonas oryzae pv. oryzae (strain MAFF 311018)).